The following is an 846-amino-acid chain: Disrupted in schizophrenia 1 homolog (846 aa).

5 disordered regions span residues 1–53 (MQGA…IGFL), 127–147 (HSGV…GDSG), 231–257 (EAEP…GEPR), 277–312 (TRSN…QDGG), and 409–436 (LHGA…AQDS). Residues 1-288 (MQGAGSRGAW…SNRQPECGMV (288 aa)) form an interaction with MAP1A region. Composition is skewed to basic and acidic residues over residues 133-143 (GNDRRQSERLT) and 248-257 (GSDRPHGEPR). The segment covering 277–300 (TRSNRQPECGMVSSSDAGFSSQDA) has biased composition (polar residues). The interval 289–686 (SSSDAGFSSQ…LERVWKADLE (398 aa)) is interaction with TRAF3IP1. The segment at 429-587 (RRTTAQDSLP…LLEAKMLALS (159 aa)) is required for localization to punctate cytoplasmic foci. A necessary and sufficient for interaction with PCNT and localization at the centrosome region spans residues 435-846 (DSLPGLAVTR…STAGAQEAED (412 aa)). Residues 440-489 (LAVTRRDWLMREKEQLQKEIEALRARVSVLEAKEQRLSQELEDQEMLLRW) are a coiled coil. An interaction with ATF4 and ATF5 region spans residues 588–846 (GSCFSTAKEL…STAGAQEAED (259 aa)). The tract at residues 721-846 (TAALAVPRTP…STAGAQEAED (126 aa)) is interaction with NDEL1 and PAFAH1B1. The segment at 721 to 846 (TAALAVPRTP…STAGAQEAED (126 aa)) is interaction with PAFAH1B1. The interaction with NDEL1 stretch occupies residues 795–828 (GHDEALFQSLQGELQMVKETLQTMFLQLQPAKEA).

In terms of assembly, interacts with NDEL1. Interacts with CCDC88A (via C-terminus); the interaction is direct. Interacts with GSK3B. Interacts with tubulin alpha, ACTN2, ANKHD1, ATF4, ATF5, CEP63, EIF3S3, MAP1A, NDEL1, PAFAH1B1, RANBP9, SPTBN4, SYNE1 and TRAF3IP1. Interaction with microtubules may be mediated in part by TRAF3IP1. Interacts (via C-terminal) with PCNT. Interacts with CHCHD6. Interacts with CCDC141. Interacts with FBXW7, the substrate-recognition component of a SCF (SKP1-CUL1-F-box protein) E3 ubiquitin-protein ligase complex; the interaction targets DISC1 for proteasomal degradation. Interacts with ZNF365. Interacts with ATF4; inhibiting ATF4 transcription factor activity by disrupting ATF4 dimerization and DNA-binding. Interacts with PDE4B. In terms of processing, ubiquitinated. Ubiquitination with 'Lys-48'-linked polyubiquitin chains leads to its proteasomal degradation. In terms of tissue distribution, expressed in brain, heart, kidney, liver and thymus. Within the brain expression is high in the cerebral cortex, hippocampus and olfactory bulb and is also seen at lower levels in the cerebellum (at protein level).

The protein resides in the cytoplasm. It is found in the cytoskeleton. The protein localises to the mitochondrion. It localises to the microtubule organizing center. Its subcellular location is the centrosome. The protein resides in the postsynaptic density. Involved in the regulation of multiple aspects of embryonic and adult neurogenesis. Required for neural progenitor proliferation in the ventrical/subventrical zone during embryonic brain development and in the adult dentate gyrus of the hippocampus. Participates in the Wnt-mediated neural progenitor proliferation as a positive regulator by modulating GSK3B activity and CTNNB1 abundance. Plays a role as a modulator of the AKT-mTOR signaling pathway controlling the tempo of the process of newborn neurons integration during adult neurogenesis, including neuron positioning, dendritic development and synapse formation. Inhibits the activation of AKT-mTOR signaling upon interaction with CCDC88A. Regulates the migration of early-born granule cell precursors toward the dentate gyrus during the hippocampal development. Inhibits ATF4 transcription factor activity in neurons by disrupting ATF4 dimerization and DNA-binding. Plays a role, together with PCNT, in the microtubule network formation. In Rattus norvegicus (Rat), this protein is Disrupted in schizophrenia 1 homolog.